A 395-amino-acid polypeptide reads, in one-letter code: Putative transport protein sll0063 (395 aa).

8 helical membrane passes run 24–44 (LNAI…VLNA), 50–70 (IFGY…IAFL), 91–111 (FVFL…IPLA), 180–200 (VFTV…FYLL), 245–265 (ALGL…LFGL), 269–289 (VMAL…FLVA), 295–315 (MALQ…NGIA), and 328–348 (FWVL…GVIV).

It belongs to the autoinducer-2 exporter (AI-2E) (TC 2.A.86) family.

Its subcellular location is the cell membrane. This Synechocystis sp. (strain ATCC 27184 / PCC 6803 / Kazusa) protein is Putative transport protein sll0063.